Reading from the N-terminus, the 164-residue chain is F-box protein At4g05010 (164 aa).

The disordered stretch occupies residues 38–57 (SKRAPENDSPPVKRPSHETT). The 49-residue stretch at 61 to 109 (RSLLETLHQDILIRVLCHVDHEDLATLKRVSKTIRKAVIEAKKSHFDYS) folds into the F-box domain.

The sequence is that of F-box protein At4g05010 from Arabidopsis thaliana (Mouse-ear cress).